Consider the following 845-residue polypeptide: Protein arginine N-methyltransferase 9 (845 aa).

TPR repeat units lie at residues V25–L58, Q67–D100, and E101–F134. SAM-dependent MTase PRMT-type domains follow at residues A137–I466 and N530–Q845.

The protein belongs to the class I-like SAM-binding methyltransferase superfamily. Protein arginine N-methyltransferase family. Found in a complex with PRMT9, SF3B2 and SF3B4. Interacts with SF3B2.

Its subcellular location is the cytoplasm. It catalyses the reaction L-arginyl-[protein] + 2 S-adenosyl-L-methionine = N(omega),N(omega)'-dimethyl-L-arginyl-[protein] + 2 S-adenosyl-L-homocysteine + 2 H(+). Functionally, arginine methyltransferase that can both catalyze the formation of omega-N monomethylarginine (MMA) and symmetrical dimethylarginine (sDMA). Specifically mediates the symmetrical dimethylation of SF3B2. Involved in the regulation of alternative splicing of pre-mRNA. The polypeptide is Protein arginine N-methyltransferase 9 (Homo sapiens (Human)).